We begin with the raw amino-acid sequence, 477 residues long: Bifunctional protein HldE (477 aa).

Residues methionine 1 to alanine 319 are ribokinase. Asparagine 195–glutamate 198 lines the ATP pocket. Aspartate 264 is an active-site residue. Residues methionine 346 to glycine 477 are cytidylyltransferase.

In the N-terminal section; belongs to the carbohydrate kinase PfkB family. It in the C-terminal section; belongs to the cytidylyltransferase family. As to quaternary structure, homodimer.

It catalyses the reaction D-glycero-beta-D-manno-heptose 7-phosphate + ATP = D-glycero-beta-D-manno-heptose 1,7-bisphosphate + ADP + H(+). The catalysed reaction is D-glycero-beta-D-manno-heptose 1-phosphate + ATP + H(+) = ADP-D-glycero-beta-D-manno-heptose + diphosphate. It participates in nucleotide-sugar biosynthesis; ADP-L-glycero-beta-D-manno-heptose biosynthesis; ADP-L-glycero-beta-D-manno-heptose from D-glycero-beta-D-manno-heptose 7-phosphate: step 1/4. The protein operates within nucleotide-sugar biosynthesis; ADP-L-glycero-beta-D-manno-heptose biosynthesis; ADP-L-glycero-beta-D-manno-heptose from D-glycero-beta-D-manno-heptose 7-phosphate: step 3/4. Its function is as follows. Catalyzes the phosphorylation of D-glycero-D-manno-heptose 7-phosphate at the C-1 position to selectively form D-glycero-beta-D-manno-heptose-1,7-bisphosphate. Functionally, catalyzes the ADP transfer from ATP to D-glycero-beta-D-manno-heptose 1-phosphate, yielding ADP-D-glycero-beta-D-manno-heptose. The protein is Bifunctional protein HldE of Halorhodospira halophila (strain DSM 244 / SL1) (Ectothiorhodospira halophila (strain DSM 244 / SL1)).